Here is a 410-residue protein sequence, read N- to C-terminus: Sulfate adenylyltransferase (410 aa).

It belongs to the sulfate adenylyltransferase family.

It catalyses the reaction sulfate + ATP + H(+) = adenosine 5'-phosphosulfate + diphosphate. It functions in the pathway sulfur metabolism; hydrogen sulfide biosynthesis; sulfite from sulfate: step 1/3. The chain is Sulfate adenylyltransferase from Syntrophobacter fumaroxidans (strain DSM 10017 / MPOB).